Here is a 303-residue protein sequence, read N- to C-terminus: 4-diphosphocytidyl-2-C-methyl-D-erythritol kinase (303 aa).

Residue lysine 18 is part of the active site. ATP is bound at residue proline 111–alanine 121. Residue aspartate 153 is part of the active site.

This sequence belongs to the GHMP kinase family. IspE subfamily.

It catalyses the reaction 4-CDP-2-C-methyl-D-erythritol + ATP = 4-CDP-2-C-methyl-D-erythritol 2-phosphate + ADP + H(+). It participates in isoprenoid biosynthesis; isopentenyl diphosphate biosynthesis via DXP pathway; isopentenyl diphosphate from 1-deoxy-D-xylulose 5-phosphate: step 3/6. Functionally, catalyzes the phosphorylation of the position 2 hydroxy group of 4-diphosphocytidyl-2C-methyl-D-erythritol. This is 4-diphosphocytidyl-2-C-methyl-D-erythritol kinase from Sinorhizobium medicae (strain WSM419) (Ensifer medicae).